The primary structure comprises 1187 residues: Myelin transcription factor 1-like protein (1187 aa).

The disordered stretch occupies residues 1–20 (MDVDAEEKRHRTRSKGVRVP). The segment at 22 to 65 (EPAIQELFSCPTPGCDGSGHVSGKYARHRSVYGCPLAKKRKTQD) adopts a CCHHC-type 1 zinc-finger fold. The Zn(2+) site is built by Cys31, Cys36, His49, and Cys55. Disordered regions lie at residues 56–178 (PLAK…QMSC) and 221–248 (RTES…GRKS). The segment covering 89–172 (ECYESDGTED…EEEEEEEENE (84 aa)) has biased composition (acidic residues). At Ser251 the chain carries Phosphoserine. 2 disordered regions span residues 343 to 422 (SETN…DRSE) and 450 to 509 (REKM…PTPG). The segment covering 344–358 (ETNPQDRSQPPNMSV) has biased composition (polar residues). 3 stretches are compositionally biased toward basic and acidic residues: residues 362–377 (VRQE…DRSY), 401–412 (AKEDGCHERDDD), and 450–504 (REKM…RESK). 2 consecutive CCHHC-type zinc fingers follow at residues 496-539 (SRTE…PPEI) and 540-583 (LAMH…KLAK). Cys505, Cys510, His523, Cys529, Cys549, Cys554, His567, and Cys573 together coordinate Zn(2+). A disordered region spans residues 684–708 (ASPSSSTTSSYAPSSSSNLSCGGGS). 3 CCHHC-type zinc fingers span residues 895–938 (LATS…GIRI), 944–987 (DKED…QKDG), and 997–1040 (KSVK…MKKA). Zn(2+) is bound by residues Cys904, Cys909, His922, Cys928, Cys953, Cys958, His971, Cys977, Cys1006, Cys1011, His1024, and Cys1030. The stretch at 1055–1131 (SNGIENDEEI…LANLSQSLIH (77 aa)) forms a coiled coil.

It belongs to the MYT1 family. In terms of assembly, interacts with SIN3B. In terms of tissue distribution, brain, testis and pituitary gland. Expression is higher in the brain than in the testis and pituitary gland. Highest level expression seen in the developing CNS.

Its subcellular location is the nucleus. The protein resides in the chromosome. Its function is as follows. Transcription factor that plays a key role in neuronal differentiation. Acts by specifically repressing expression of non-neuronal genes during neuron differentiation. In contrast to other transcription repressors that inhibit specific lineages, mediates repression of multiple differentiation programs. Also represses expression of negative regulators of neurogenesis, such as members of the Notch signaling pathway, including HES1. The combination of three transcription factors, ASCL1, POU3F2/BRN2 and MYT1L, is sufficient to reprogram fibroblasts and other somatic cells into induced neuronal (iN) cells in vitro. Directly binds the 5'-AAGTT-3' core motif present on the promoter of target genes and represses transcription by recruiting a multiprotein complex containing SIN3B. The 5'-AAGTT-3' core motif is absent from the promoter of neural genes. This chain is Myelin transcription factor 1-like protein (Myt1l), found in Rattus norvegicus (Rat).